A 315-amino-acid polypeptide reads, in one-letter code: HTH-type transcriptional regulator TreR (315 aa).

Residues 5-59 (LTIKDIARLSGVGKSTVSRVLNNESGVSQLTRERVEAVMNQHGFSPSRSARAMRG) form the HTH lacI-type domain. Positions 7-26 (IKDIARLSGVGKSTVSRVLN) form a DNA-binding region, H-T-H motif. Residues 71–77 (RLDSLSE), glycine 126, arginine 147, 187–190 (DVTT), arginine 194, threonine 242, and tyrosine 284 contribute to the alpha,alpha-trehalose 6-phosphate site.

In terms of assembly, homodimer.

Its function is as follows. Repressor of the treBC operon. It is able to bind trehalose-6-phosphate and trehalose. This Escherichia coli (strain K12) protein is HTH-type transcriptional regulator TreR (treR).